The primary structure comprises 230 residues: UPF0702 transmembrane protein YcaP (230 aa).

A run of 3 helical transmembrane segments spans residues 16 to 36 (FDFLGEVALRSLYTFVLVFLF), 48 to 68 (MSLFEVLIILTLGSAAGDVAF), and 75 to 95 (VPVLIVFITLALLYRLVMWLM).

Belongs to the UPF0702 family.

The protein localises to the cell membrane. The sequence is that of UPF0702 transmembrane protein YcaP (ycaP) from Escherichia coli (strain K12).